We begin with the raw amino-acid sequence, 508 residues long: Probable protein kinase UbiB (508 aa).

Residues Asp118–Leu494 enclose the Protein kinase domain. ATP is bound by residues Val124–Val132 and Lys151. The active-site Proton acceptor is Asp286. A helical membrane pass occupies residues Gln488 to Leu508.

Belongs to the ABC1 family. UbiB subfamily.

The protein resides in the cell inner membrane. The protein operates within cofactor biosynthesis; ubiquinone biosynthesis [regulation]. Its function is as follows. Is probably a protein kinase regulator of UbiI activity which is involved in aerobic coenzyme Q (ubiquinone) biosynthesis. This Chromobacterium violaceum (strain ATCC 12472 / DSM 30191 / JCM 1249 / CCUG 213 / NBRC 12614 / NCIMB 9131 / NCTC 9757 / MK) protein is Probable protein kinase UbiB.